The chain runs to 470 residues: Siroheme synthase 2 (470 aa).

Residues 1–202 form a precorrin-2 dehydrogenase /sirohydrochlorin ferrochelatase region; the sequence is MDYLPMFAKL…EDWQGAEQWL (202 aa). NAD(+) is bound by residues 22–23 and 43–44; these read EV and PE. S126 is modified (phosphoserine). A uroporphyrinogen-III C-methyltransferase region spans residues 214–470; sequence GEVVLVGAGP…TCDLKLVSLA (257 aa). Position 223 (P223) interacts with S-adenosyl-L-methionine. D246 acts as the Proton acceptor in catalysis. K268 (proton donor) is an active-site residue. Residues 299–301, 329–330, M381, and G410 contribute to the S-adenosyl-L-methionine site; these read GGD and TA.

This sequence in the N-terminal section; belongs to the precorrin-2 dehydrogenase / sirohydrochlorin ferrochelatase family. In the C-terminal section; belongs to the precorrin methyltransferase family.

It carries out the reaction uroporphyrinogen III + 2 S-adenosyl-L-methionine = precorrin-2 + 2 S-adenosyl-L-homocysteine + H(+). The catalysed reaction is precorrin-2 + NAD(+) = sirohydrochlorin + NADH + 2 H(+). The enzyme catalyses siroheme + 2 H(+) = sirohydrochlorin + Fe(2+). Its pathway is cofactor biosynthesis; adenosylcobalamin biosynthesis; precorrin-2 from uroporphyrinogen III: step 1/1. The protein operates within cofactor biosynthesis; adenosylcobalamin biosynthesis; sirohydrochlorin from precorrin-2: step 1/1. It functions in the pathway porphyrin-containing compound metabolism; siroheme biosynthesis; precorrin-2 from uroporphyrinogen III: step 1/1. It participates in porphyrin-containing compound metabolism; siroheme biosynthesis; siroheme from sirohydrochlorin: step 1/1. Its pathway is porphyrin-containing compound metabolism; siroheme biosynthesis; sirohydrochlorin from precorrin-2: step 1/1. In terms of biological role, multifunctional enzyme that catalyzes the SAM-dependent methylations of uroporphyrinogen III at position C-2 and C-7 to form precorrin-2 via precorrin-1. Then it catalyzes the NAD-dependent ring dehydrogenation of precorrin-2 to yield sirohydrochlorin. Finally, it catalyzes the ferrochelation of sirohydrochlorin to yield siroheme. In Aeromonas hydrophila subsp. hydrophila (strain ATCC 7966 / DSM 30187 / BCRC 13018 / CCUG 14551 / JCM 1027 / KCTC 2358 / NCIMB 9240 / NCTC 8049), this protein is Siroheme synthase 2.